The sequence spans 537 residues: Cytoplasmic dynein 2 intermediate chain 2 (537 aa).

Ser-15 carries the phosphoserine modification. The interval 80–93 is DYNLL2 binding; it reads RTHADAQVQTEAPE. Residues 107–132 are DYNLRB1 binding; the sequence is LRLEAFLRRVEAMVIRELNNNWQSHA. WD repeat units follow at residues 216-256, 265-309, 391-431, 434-474, and 481-521; these read EVPS…DPLL, THTD…QLRL, PHGG…PLTS, LSHK…QKPT, and QDGS…TEQG.

Belongs to the dynein light intermediate chain family. In terms of assembly, the cytoplasmic dynein 2 complex consists of two catalytic heavy chains (HCs) and a number of non-catalytic subunits presented by intermediate chains (ICs), light intermediate chains (LICs) and light chains (LCs). Among them, a heavy chain (DYNC2H1), two intermediate chains (DYNC2I2 and DYNC2I1), a light intermediate chain (DYNC2LI1), and a light chain (DYNLT2B) are unique to the cytoplasmic dynein complex 2, but a subset of the light chains are also shared by dynein-1 and dynein-2 complexes. Interacts with DYNC2I1; their C-terminal domains each bind a copy of the heavy chain, and their extended N-terminal regions are held together by an array of light chain dimers. Interacts with DYNLL2; this interaction is essential for dynein-2-mediated retrograde trafficking of ciliary proteins. Interacts with DYNLRB1; this interaction is essential for dynein-2-mediated retrograde trafficking of ciliary proteins. Interacts (via the WD domains) with MAP3K7 and TAB3. Interacts (via WD domains) with TAB2 (via C-terminus). Interacts (via WD domains) with TRAF6 (via TRAF-type domains). In terms of tissue distribution, expressed in brain, thymus, heart, lung, liver, spleen, kidney, testis and intestine.

The protein resides in the cytoplasm. Its subcellular location is the cytoskeleton. The protein localises to the cilium basal body. It is found in the cilium axoneme. It localises to the cell projection. The protein resides in the cilium. Its subcellular location is the microtubule organizing center. The protein localises to the centrosome. It is found in the filopodium. Acts as one of several non-catalytic accessory components of the cytoplasmic dynein 2 complex (dynein-2 complex), a motor protein complex that drives the movement of cargos along microtubules within cilia and flagella in concert with the intraflagellar transport (IFT) system. DYNC2I2 plays a major role in retrograde ciliary protein trafficking and in ciliogenesis. Required also to maintain a functional transition zone. In terms of biological role, acts as a negative regulator of the Toll-like and IL-1R receptor signaling pathways. Inhibits the MAP3K7-induced NF-kappa-B activation pathway. Inhibits MAP3K7 phosphorylation at 'Thr-184' and 'Thr-187' upon Il-1 beta stimulation. This is Cytoplasmic dynein 2 intermediate chain 2 (Dync2i2) from Mus musculus (Mouse).